The primary structure comprises 274 residues: ATP synthase subunit b 2 (274 aa).

Residues 2–22 form a helical membrane-spanning segment; sequence HIDWFVLLAQLVNFLILIYLL.

The protein belongs to the ATPase B chain family. As to quaternary structure, F-type ATPases have 2 components, F(1) - the catalytic core - and F(0) - the membrane proton channel. F(1) has five subunits: alpha(3), beta(3), gamma(1), delta(1), epsilon(1). F(0) has three main subunits: a(1), b(2) and c(10-14). The alpha and beta chains form an alternating ring which encloses part of the gamma chain. F(1) is attached to F(0) by a central stalk formed by the gamma and epsilon chains, while a peripheral stalk is formed by the delta and b chains.

It is found in the cell inner membrane. F(1)F(0) ATP synthase produces ATP from ADP in the presence of a proton or sodium gradient. F-type ATPases consist of two structural domains, F(1) containing the extramembraneous catalytic core and F(0) containing the membrane proton channel, linked together by a central stalk and a peripheral stalk. During catalysis, ATP synthesis in the catalytic domain of F(1) is coupled via a rotary mechanism of the central stalk subunits to proton translocation. Its function is as follows. Component of the F(0) channel, it forms part of the peripheral stalk, linking F(1) to F(0). This Syntrophus aciditrophicus (strain SB) protein is ATP synthase subunit b 2.